The following is a 332-amino-acid chain: Endonuclease 8-like 2 (332 aa).

The active-site Schiff-base intermediate with DNA is P2. E3 serves as the catalytic Proton donor. Residue K50 is the Proton donor; for beta-elimination activity of the active site. Position 50 is an N6-acetyllysine (K50). The interval 56–121 (FDPDEEMGPP…EDDSEYLERD (66 aa)) is disordered. The residue at position 68 (S68) is a Phosphoserine. Basic and acidic residues predominate over residues 74-84 (PQKEAQKEGAA). Over residues 94 to 105 (GQKTPDGSSQSA) the composition is skewed to polar residues. An N6-acetyllysine modification is found at K154. N231 is a binding site for DNA. An FPG-type zinc finger spans residues 284-320 (QVYQREQCPAGHQVMKEAFGPQDGLQRLTWWCPQCQP). R310 serves as the catalytic Proton donor; for delta-elimination activity.

Belongs to the FPG family. In terms of assembly, binds EP300.

It localises to the nucleus. The catalysed reaction is 2'-deoxyribonucleotide-(2'-deoxyribose 5'-phosphate)-2'-deoxyribonucleotide-DNA = a 3'-end 2'-deoxyribonucleotide-(2,3-dehydro-2,3-deoxyribose 5'-phosphate)-DNA + a 5'-end 5'-phospho-2'-deoxyribonucleoside-DNA + H(+). Its activity is regulated as follows. Acetylation of Lys-50 leads to loss of DNA nicking activity. Its function is as follows. Involved in base excision repair of DNA damaged by oxidation or by mutagenic agents. Has DNA glycosylase activity towards 5-hydroxyuracil and other oxidized derivatives of cytosine with a preference for mismatched double-stranded DNA (DNA bubbles). Has low or no DNA glycosylase activity towards thymine glycol, 2-hydroxyadenine, hypoxanthine and 8-oxoguanine. Has AP (apurinic/apyrimidinic) lyase activity and introduces nicks in the DNA strand. Cleaves the DNA backbone by beta-delta elimination to generate a single-strand break at the site of the removed base with both 3'- and 5'-phosphates. This Pongo abelii (Sumatran orangutan) protein is Endonuclease 8-like 2 (NEIL2).